The following is a 305-amino-acid chain: UPF0282 protein Pisl_0021 (305 aa).

This sequence belongs to the UPF0282 family.

This is UPF0282 protein Pisl_0021 from Pyrobaculum islandicum (strain DSM 4184 / JCM 9189 / GEO3).